We begin with the raw amino-acid sequence, 183 residues long: Endoribonuclease YbeY (183 aa).

Residues histidine 143, histidine 147, and histidine 153 each coordinate Zn(2+).

This sequence belongs to the endoribonuclease YbeY family. Zn(2+) is required as a cofactor.

The protein resides in the cytoplasm. Its function is as follows. Single strand-specific metallo-endoribonuclease involved in late-stage 70S ribosome quality control and in maturation of the 3' terminus of the 16S rRNA. The polypeptide is Endoribonuclease YbeY (Rickettsia bellii (strain RML369-C)).